A 114-amino-acid polypeptide reads, in one-letter code: As-peptide 126 (114 aa).

Residues 1–22 form the signal peptide; the sequence is MSRALICSLALLAMLVISGTYA. Tandem repeats lie at residues 22 to 29, 30 to 37, 38 to 45, 46 to 53, 54 to 61, 62 to 69, 70 to 77, 78 to 85, and 86 to 93. Residues 22 to 93 are 9 X 8 AA approximate tandem repeats of [AP]-[ILS]-[AP]-A-A-N-A-[DE]; the sequence is ASPAANAEAL…AEPLAAANAE (72 aa). The propeptide occupies 23–104; the sequence is SPAANAEALA…SAGPSPLAAA (82 aa). Residues 82 to 96 show a composition bias toward low complexity; the sequence is ANAEPLAAANAEPSA. The disordered stretch occupies residues 82 to 114; it reads ANAEPLAAANAEPSAGPSPLAAAQDPPVVKMKG. Pyrrolidone carboxylic acid is present on glutamine 105. Lysine 113 is subject to Lysine amide.

Expressed by the venom gland.

The protein localises to the secreted. This Anoplius samariensis (Solitary wasp) protein is As-peptide 126.